Consider the following 176-residue polypeptide: Thiol-disulfide oxidoreductase ResA (176 aa).

A helical; Signal-anchor for type II membrane protein transmembrane segment spans residues 11-30 (LSILAVISVALGYTFYSNFF). The Thioredoxin domain maps to 36-176 (ARAGEQAVNF…EFMELIKPEA (141 aa)). Cys74 and Cys77 form a disulfide bridge.

This sequence belongs to the thioredoxin family. ResA subfamily.

Its subcellular location is the cell membrane. It participates in protein modification; cytochrome c assembly. In terms of biological role, thiol-disulfide oxidoreductase which is required in disulfide reduction during c-type cytochrome synthesis. May accept reducing equivalents from CcdA, leading to breakage of disulfide bonds in apocytochrome c; following this reduction heme can be covalently attached. This chain is Thiol-disulfide oxidoreductase ResA, found in Halalkalibacterium halodurans (strain ATCC BAA-125 / DSM 18197 / FERM 7344 / JCM 9153 / C-125) (Bacillus halodurans).